A 476-amino-acid chain; its full sequence is Aspartyl/glutamyl-tRNA(Asn/Gln) amidotransferase subunit B (476 aa).

This sequence belongs to the GatB/GatE family. GatB subfamily. In terms of assembly, heterotrimer of A, B and C subunits.

It carries out the reaction L-glutamyl-tRNA(Gln) + L-glutamine + ATP + H2O = L-glutaminyl-tRNA(Gln) + L-glutamate + ADP + phosphate + H(+). It catalyses the reaction L-aspartyl-tRNA(Asn) + L-glutamine + ATP + H2O = L-asparaginyl-tRNA(Asn) + L-glutamate + ADP + phosphate + 2 H(+). In terms of biological role, allows the formation of correctly charged Asn-tRNA(Asn) or Gln-tRNA(Gln) through the transamidation of misacylated Asp-tRNA(Asn) or Glu-tRNA(Gln) in organisms which lack either or both of asparaginyl-tRNA or glutaminyl-tRNA synthetases. The reaction takes place in the presence of glutamine and ATP through an activated phospho-Asp-tRNA(Asn) or phospho-Glu-tRNA(Gln). This Variovorax paradoxus (strain S110) protein is Aspartyl/glutamyl-tRNA(Asn/Gln) amidotransferase subunit B.